Reading from the N-terminus, the 118-residue chain is uncharacterized protein (118 aa).

The segment covering 1-12 (MADDNVSFTDQG) has biased composition (polar residues). A disordered region spans residues 1 to 63 (MADDNVSFTD…KKGKTKKVRK (63 aa)). Positions 39–63 (TKKKGKKNKKSKKKAKKGKTKKVRK) are enriched in basic residues. Residues 81 to 101 (FCAGIIVAMIMLFVIIIYGII) traverse the membrane as a helical segment.

The protein resides in the membrane. This is an uncharacterized protein from Caenorhabditis elegans.